The following is a 166-amino-acid chain: Photosystem I assembly protein Ycf3 (166 aa).

TPR repeat units follow at residues 31 to 64 (AFKYYRSGMAAQVDGNYAKALGNYTEALALEEDP), 68 to 101 (SYILYNMGLIFANNGDHEKALDYYHQSLELNPNL), and 116 to 149 (GEQAEEAAELDEAERFFDLAADFWKRAIKIAPNN).

This sequence belongs to the Ycf3 family.

It localises to the cellular thylakoid membrane. Functionally, essential for the assembly of the photosystem I (PSI) complex. May act as a chaperone-like factor to guide the assembly of the PSI subunits. The protein is Photosystem I assembly protein Ycf3 of Acaryochloris marina (strain MBIC 11017).